Here is a 271-residue protein sequence, read N- to C-terminus: uncharacterized protein (271 aa).

An N-terminal signal peptide occupies residues methionine 1–alanine 22. Cysteine 23 is lipidated: N-palmitoyl cysteine. Residue cysteine 23 is the site of S-diacylglycerol cysteine attachment.

It belongs to the staphylococcal tandem lipoprotein family.

The protein localises to the cell membrane. This is an uncharacterized protein from Staphylococcus aureus (strain MW2).